The sequence spans 48 residues: Toxin CSTX-14 (48 aa).

Intrachain disulfides connect C3–C18, C10–C27, C17–C42, and C29–C40.

Belongs to the neurotoxin 19 (CSTX) family. 12 subfamily. In terms of assembly, heterodimer of A and B chains; disulfide-linked. In terms of processing, contains 4 disulfide bonds. Expressed by the venom gland.

It is found in the secreted. This is Toxin CSTX-14 from Cupiennius salei (American wandering spider).